The following is a 195-amino-acid chain: Imidazoleglycerol-phosphate dehydratase (195 aa).

Belongs to the imidazoleglycerol-phosphate dehydratase family.

It localises to the cytoplasm. It carries out the reaction D-erythro-1-(imidazol-4-yl)glycerol 3-phosphate = 3-(imidazol-4-yl)-2-oxopropyl phosphate + H2O. It functions in the pathway amino-acid biosynthesis; L-histidine biosynthesis; L-histidine from 5-phospho-alpha-D-ribose 1-diphosphate: step 6/9. The sequence is that of Imidazoleglycerol-phosphate dehydratase from Shouchella clausii (strain KSM-K16) (Alkalihalobacillus clausii).